A 248-amino-acid polypeptide reads, in one-letter code: Granzyme E (248 aa).

Residues 1–18 form the signal peptide; sequence MPPVLILLTLLLPLGAGA. Residues 19–20 constitute a propeptide that is removed on maturation; the sequence is EE. A Peptidase S1 domain is found at 21–246; the sequence is IIGGHVVKPH…FLPWISRNMK (226 aa). A disulfide bridge links Cys-50 with Cys-66. His-65 (charge relay system) is an active-site residue. 2 N-linked (GlcNAc...) asparagine glycosylation sites follow: Asn-68 and Asn-102. The active-site Charge relay system is the Asp-109. Cystine bridges form between Cys-143–Cys-210 and Cys-175–Cys-189. An N-linked (GlcNAc...) asparagine glycan is attached at Asn-154. Catalysis depends on Ser-204, which acts as the Charge relay system. Residue Asn-223 is glycosylated (N-linked (GlcNAc...) asparagine).

The protein belongs to the peptidase S1 family. Granzyme subfamily.

The protein localises to the cytolytic granule. Its function is as follows. This enzyme is probably necessary for target cell lysis in cell-mediated immune responses. This Mus musculus (Mouse) protein is Granzyme E (Gzme).